The sequence spans 1416 residues: MKDIRDFDSLQIKLASPDTIRAWSYGEVKKPETINYRTLRPEREGLFCERIFGTTKEWECFCGKFKSIRYRGVICDRCGVEVTHFKVRRERMGHIELATPVSHIWYYRCVPSRMGLLLDLQVIALRSVLYYEKYIVIEPGDTDLKKNQLLTETEYNDAQERYGGGFTAGMGAEAIRTLLQNLDLDALVAQLREKMMEKGAKSDKRLLRRIEIVENFRVSGNKPEWMILSVIPVIPPDLRPMVQLDGGRFATSDLNDLYRRVIHRNSRLIRLMELKAPDIIIRNEKRMLQEAVDALFDNSKRKPAIKGASNRPLKSISDMLKGKQGRFRQNLLGKRVDYSGRSVIVVGPELKLWQCGLPTKMALELFKPFIMKKLVEKEIVSNIKKAKMLVEQESPKVFSVLDEVVKEHPVMLNRAPTLHRLGIQAFEPVLVEGKAIRLHPLVCKPFNADFDGDQMAVHVPLTQAAQMECWTLMLSNRNLLDPANGRTIVYPSQDMVLGLYYLTKERSLPEGARPRRFSSVEEVMMAAEKGVIGWQDQIQVRYHKCDGQLVVTTAGRLVLNEEVPAEIPFVNETLDDKRIRKLIERVFKRQDSWLAVQMLDALKTIGYTYATFFGATLSMDDIIVPEQKVQMLEKANKEVLAIASQYRGGHITQEERYNRVVEVWSKTSEELTSLMMETLERDKDGFNTIYMMATSGARGSRNQIRQLAGMRGLMAKPSGDIIELPIRSNFKEGLNVIEFFISTNGARKGLADTALKTADAGYLTRRLVDIAQDVVVNEEDCGTINGIEYRAVKSGDEIIESLAERIVGKYTLERVEHPITHELLLDVNEYIDDERAEKVEEAGVESVKLRTVLTCESKRGVCVCCYGRNLARNKIVEIGEAVGIVAAQSIGQPGTQLTMRTFHVGGTASSTTEENRITFKYPILVKSIEGVHVKMEDGSQLFTRRGTLFFHKTLAEYQLQEGDSVQVRDRARVLKDEVLYHTTDGQTVYASVSGFARIIDRTVYLVGPEQKTEIRNGSNVVIKADEYVPPGKTVATFDPFTEPILAEQDGFVRYEDIILGSTLIEEVNTETGMVERRITTLKTGIQLQPRVFISDESGNALGSYYLPEEARLMVEEGAQVKAGTVIVKLAKAIQKTSDITGGLPRVSELFEARRPKNAAVLAQISGVVSFKGLFKGKRIVVVRDHYGKEYKHLVSMSRQLLVRDGDTVEAGERLCDGCFDPHDILAILGENALQNYLMNEIRDVYRVQGVSINDQHIGLVVRQMLRKTEVVSVGDTRFIYGQQVDKYRFHEENRRVEAEGGQPAVARPMFQGITKAALNIDSFISAASFQETNKVLTNAAIAGSVDDLCGLKENVIIGHLIPAGTGMRRYRQVKLFDKNKRDLDVQMEEVIRRRKLEEEALAQAVAGMEGEPEGEA.

4 residues coordinate Zn(2+): C60, C62, C75, and C78. Residues D449, D451, and D453 each contribute to the Mg(2+) site. Residues C781, C855, C862, and C865 each contribute to the Zn(2+) site.

It belongs to the RNA polymerase beta' chain family. The RNAP catalytic core consists of 2 alpha, 1 beta, 1 beta' and 1 omega subunit. When a sigma factor is associated with the core the holoenzyme is formed, which can initiate transcription. Mg(2+) serves as cofactor. It depends on Zn(2+) as a cofactor.

The catalysed reaction is RNA(n) + a ribonucleoside 5'-triphosphate = RNA(n+1) + diphosphate. Its function is as follows. DNA-dependent RNA polymerase catalyzes the transcription of DNA into RNA using the four ribonucleoside triphosphates as substrates. This Treponema pallidum (strain Nichols) protein is DNA-directed RNA polymerase subunit beta'.